A 131-amino-acid chain; its full sequence is D-ribose pyranase (131 aa).

The active-site Proton donor is His20. Substrate-binding positions include Asp28, His98, and 120 to 122 (YAN).

It belongs to the RbsD / FucU family. RbsD subfamily. Homodecamer.

Its subcellular location is the cytoplasm. The enzyme catalyses beta-D-ribopyranose = beta-D-ribofuranose. It participates in carbohydrate metabolism; D-ribose degradation; D-ribose 5-phosphate from beta-D-ribopyranose: step 1/2. Its function is as follows. Catalyzes the interconversion of beta-pyran and beta-furan forms of D-ribose. This Bacillus licheniformis (strain ATCC 14580 / DSM 13 / JCM 2505 / CCUG 7422 / NBRC 12200 / NCIMB 9375 / NCTC 10341 / NRRL NRS-1264 / Gibson 46) protein is D-ribose pyranase.